Reading from the N-terminus, the 133-residue chain is Holo-[acyl-carrier-protein] synthase (133 aa).

Mg(2+) contacts are provided by aspartate 8 and glutamate 64.

It belongs to the P-Pant transferase superfamily. AcpS family. The cofactor is Mg(2+).

The protein resides in the cytoplasm. It catalyses the reaction apo-[ACP] + CoA = holo-[ACP] + adenosine 3',5'-bisphosphate + H(+). Functionally, transfers the 4'-phosphopantetheine moiety from coenzyme A to a Ser of acyl-carrier-protein. This Shewanella loihica (strain ATCC BAA-1088 / PV-4) protein is Holo-[acyl-carrier-protein] synthase.